A 274-amino-acid polypeptide reads, in one-letter code: Phosphoribosylaminoimidazole-succinocarboxamide synthase (274 aa).

Belongs to the SAICAR synthetase family.

The catalysed reaction is 5-amino-1-(5-phospho-D-ribosyl)imidazole-4-carboxylate + L-aspartate + ATP = (2S)-2-[5-amino-1-(5-phospho-beta-D-ribosyl)imidazole-4-carboxamido]succinate + ADP + phosphate + 2 H(+). The protein operates within purine metabolism; IMP biosynthesis via de novo pathway; 5-amino-1-(5-phospho-D-ribosyl)imidazole-4-carboxamide from 5-amino-1-(5-phospho-D-ribosyl)imidazole-4-carboxylate: step 1/2. In Nitrosopumilus maritimus (strain SCM1), this protein is Phosphoribosylaminoimidazole-succinocarboxamide synthase.